Reading from the N-terminus, the 521-residue chain is Adenosylhomocysteinase-like 1 (521 aa).

Residues 1 to 92 (MNNLADTVVV…EKVQKNSKGS (92 aa)) form a disordered region. A compositionally biased stretch (low complexity) spans 54–73 (RSLSASSTDSFSSASYTGSS). Residues Asp220 and Glu245 each contribute to the substrate site. Residue 246–248 (SVT) participates in NAD(+) binding. Lys275 and Asp279 together coordinate substrate. NAD(+) is bound by residues 311–316 (GDVGKG), Glu332, 388–390 (MGH), Asn435, Lys515, 515–519 (KPNYY), and Tyr519.

This sequence belongs to the adenosylhomocysteinase family. As to quaternary structure, interacts with Ahcy; the interaction may negatively regulate Ahcy catalytic activity. NAD(+) serves as cofactor.

In terms of biological role, might play a role in the regulation of methionine metabolism possibly by binding and inactivating Ahcy. This Drosophila melanogaster (Fruit fly) protein is Adenosylhomocysteinase-like 1.